We begin with the raw amino-acid sequence, 386 residues long: Methionine import ATP-binding protein MetN 2 (386 aa).

In terms of domain architecture, ABC transporter spans 32 to 272 (VIFDDVGKVF…PQHDATRALL (241 aa)). 69–76 (GRSGAGKS) lines the ATP pocket.

It belongs to the ABC transporter superfamily. Methionine importer (TC 3.A.1.24) family. As to quaternary structure, the complex is composed of two ATP-binding proteins (MetN), two transmembrane proteins (MetI) and a solute-binding protein (MetQ).

Its subcellular location is the cell inner membrane. It carries out the reaction L-methionine(out) + ATP + H2O = L-methionine(in) + ADP + phosphate + H(+). The catalysed reaction is D-methionine(out) + ATP + H2O = D-methionine(in) + ADP + phosphate + H(+). In terms of biological role, part of the ABC transporter complex MetNIQ involved in methionine import. Responsible for energy coupling to the transport system. This chain is Methionine import ATP-binding protein MetN 2, found in Paraburkholderia xenovorans (strain LB400).